We begin with the raw amino-acid sequence, 300 residues long: UDP-3-O-acyl-N-acetylglucosamine deacetylase (300 aa).

Zn(2+) contacts are provided by histidine 78, histidine 237, and aspartate 241. Histidine 264 functions as the Proton donor in the catalytic mechanism.

This sequence belongs to the LpxC family. It depends on Zn(2+) as a cofactor.

The catalysed reaction is a UDP-3-O-[(3R)-3-hydroxyacyl]-N-acetyl-alpha-D-glucosamine + H2O = a UDP-3-O-[(3R)-3-hydroxyacyl]-alpha-D-glucosamine + acetate. It functions in the pathway glycolipid biosynthesis; lipid IV(A) biosynthesis; lipid IV(A) from (3R)-3-hydroxytetradecanoyl-[acyl-carrier-protein] and UDP-N-acetyl-alpha-D-glucosamine: step 2/6. Its function is as follows. Catalyzes the hydrolysis of UDP-3-O-myristoyl-N-acetylglucosamine to form UDP-3-O-myristoylglucosamine and acetate, the committed step in lipid A biosynthesis. The sequence is that of UDP-3-O-acyl-N-acetylglucosamine deacetylase from Acinetobacter baumannii (strain AB307-0294).